We begin with the raw amino-acid sequence, 192 residues long: Putative 3-methyladenine DNA glycosylase (192 aa).

The protein belongs to the DNA glycosylase MPG family.

This chain is Putative 3-methyladenine DNA glycosylase, found in Methanoculleus marisnigri (strain ATCC 35101 / DSM 1498 / JR1).